The chain runs to 268 residues: tRNA (guanine-N(1)-)-methyltransferase (268 aa).

S-adenosyl-L-methionine contacts are provided by residues Gly-110 and 129-134; that span reads IGDFVM. The tract at residues 246–268 is disordered; it reads WGAPPAPVKRHRKRRPETTESAS.

Belongs to the RNA methyltransferase TrmD family. In terms of assembly, homodimer.

It is found in the cytoplasm. The enzyme catalyses guanosine(37) in tRNA + S-adenosyl-L-methionine = N(1)-methylguanosine(37) in tRNA + S-adenosyl-L-homocysteine + H(+). Its function is as follows. Specifically methylates guanosine-37 in various tRNAs. The sequence is that of tRNA (guanine-N(1)-)-methyltransferase from Deinococcus deserti (strain DSM 17065 / CIP 109153 / LMG 22923 / VCD115).